Consider the following 337-residue polypeptide: 2-oxoglutarate-dependent dioxygenase frbA (337 aa).

The 116-residue stretch at 175-290 (CSAELRLNHY…RHSLAYFGKP (116 aa)) folds into the Fe2OG dioxygenase domain. His-202, Asp-204, and His-262 together coordinate Fe cation. Residue Arg-281 participates in 2-oxoglutarate binding.

It belongs to the iron/ascorbate-dependent oxidoreductase family. It depends on Fe(2+) as a cofactor.

It functions in the pathway antifungal biosynthesis. 2-oxoglutarate-dependent dioxygenase; part of the gene cluster that mediates the biosynthesis of the antifungal antibiotic FR901469, an inhibitor of beta-1,3-glucansynthase, exerting antifungal activity against the pathogenes Candida albicans and Aspergillus fumigatus. FR901469 is a cyclic depsipeptide containing 12 amino acid residues and a fatty acid chain. The NRPS frbI contains 12 modules responsible for the formation of the depsipeptide backbone which is denoted as Acyl-Thr-Ala-Tyr-Val-4OHPro-Thr-Thr-3OHPro-threo3OHGln-Gly-Thr-Orn-OH (C71H116N14O23). The PKS frbB is probably involved in the production of the hydrocarbon chain, and the acyl-CoA ligase frbC might be involved in the transport of the chain to the peptide ptoduct of frbI. Because FR901469 contains 3 hydroxylated amino acid residues, the 3 oxygenases frbA, frbH, and frbJ might be participating in amino acid hydroxylation. As no thioesterase domains were detected in frbI or frbB, the thioesterases frbD and frbE may instead release and cyclize the products of the NRPS and PKS, respectively. The chain is 2-oxoglutarate-dependent dioxygenase frbA from Dothideomycetidae sp. (strain 11243) (Fungal sp. (strain No.11243)).